The chain runs to 585 residues: Sodium/calcium exchanger NCL (585 aa).

The next 5 helical transmembrane spans lie at 83–103, 106–126, 149–169, 212–232, and 239–259; these read VFLI…LSAG, LLLE…MLGA, VSVG…VIWG, IMAI…LGST, and VLIA…YQVF. EF-hand domains are found at residues 299 to 334 and 339 to 374; these read PDEH…ISFE and DKDD…WLIQ. Residues D312, N314, D316, H318, E323, D352, D356, Q358, and E363 each contribute to the Ca(2+) site. 2 consecutive transmembrane segments (helical) span residues 427 to 447 and 457 to 477; these read WITI…AAFA and FSAA…PLAT. An N-linked (GlcNAc...) asparagine glycan is attached at N478. 3 helical membrane passes run 505 to 525, 532 to 552, and 558 to 578; these read CGGV…IVYV, FSSE…FASF, and LWTC…VYIL.

It belongs to the Ca(2+):cation antiporter (CaCA) (TC 2.A.19) family. As to expression, expressed in roots, leaves, stems, petals, stamens, ovules and siliques.

The protein resides in the cell membrane. It localises to the vacuole membrane. Its function is as follows. Possesses sodium/calcium exchanger (NCX) activity when expressed in a heterologous mammalian CHO-K1 cell system. Does not possess cation/proton exchanger (CAX) or sodium/proton (NHX) activity when expressed in a heterologous yeast cell system. Has the ability to bind calcium in vitro. Participates in the maintenance of calcium homeostasis. May play a role in auxin response, diurnal rhythm and flowering time. Involved in salt stress response. In Arabidopsis thaliana (Mouse-ear cress), this protein is Sodium/calcium exchanger NCL.